A 277-amino-acid chain; its full sequence is Large ribosomal subunit protein uL2 (277 aa).

The segment at G222–K258 is disordered.

It belongs to the universal ribosomal protein uL2 family. In terms of assembly, part of the 50S ribosomal subunit. Forms a bridge to the 30S subunit in the 70S ribosome.

Functionally, one of the primary rRNA binding proteins. Required for association of the 30S and 50S subunits to form the 70S ribosome, for tRNA binding and peptide bond formation. It has been suggested to have peptidyltransferase activity; this is somewhat controversial. Makes several contacts with the 16S rRNA in the 70S ribosome. The sequence is that of Large ribosomal subunit protein uL2 from Clostridium perfringens (strain 13 / Type A).